A 134-amino-acid polypeptide reads, in one-letter code: Psoriasis susceptibility 1 candidate gene 2 protein homolog (134 aa).

Residues 1–21 (MLTWKLLGLLVLCLCAGGISG) form the signal peptide. Residues 18–134 (GISGNGDPSP…DLDPPQEEYR (117 aa)) form a disordered region. Pro residues-rich tracts occupy residues 39-67 (PPLP…PPGS) and 81-98 (PPKP…PDDP). Acidic residues predominate over residues 122–134 (EEPDLDPPQEEYR).

Its subcellular location is the secreted. The chain is Psoriasis susceptibility 1 candidate gene 2 protein homolog (Psors1c2) from Mus musculus (Mouse).